Here is a 189-residue protein sequence, read N- to C-terminus: Ribosome maturation factor RimM (189 aa).

In terms of domain architecture, PRC barrel spans 96–169 (EDEFYYADLE…TLLIDPLAAG (74 aa)).

This sequence belongs to the RimM family. In terms of assembly, binds ribosomal protein uS19.

It localises to the cytoplasm. In terms of biological role, an accessory protein needed during the final step in the assembly of 30S ribosomal subunit, possibly for assembly of the head region. Essential for efficient processing of 16S rRNA. May be needed both before and after RbfA during the maturation of 16S rRNA. It has affinity for free ribosomal 30S subunits but not for 70S ribosomes. This chain is Ribosome maturation factor RimM, found in Rhizobium johnstonii (strain DSM 114642 / LMG 32736 / 3841) (Rhizobium leguminosarum bv. viciae).